The primary structure comprises 465 residues: Methionine aminopeptidase 2-2 (465 aa).

Basic and acidic residues predominate over residues 1–13 (MGSKTPNDHRRGP). The interval 1-92 (MGSKTPNDHR…KKKTLLGGLQ (92 aa)) is disordered. The segment covering 44–55 (GETEDGEDEDDD) has biased composition (acidic residues). Over residues 71-86 (TKKKNKRKKNKKKKKT) the composition is skewed to basic residues. His-217 contributes to the substrate binding site. A divalent metal cation-binding residues include Asp-238, Asp-249, and His-318. His-326 contacts substrate. 2 residues coordinate a divalent metal cation: Glu-351 and Glu-446.

This sequence belongs to the peptidase M24A family. Methionine aminopeptidase eukaryotic type 2 subfamily. The cofactor is Co(2+). Zn(2+) serves as cofactor. Requires Mn(2+) as cofactor. Fe(2+) is required as a cofactor.

The protein localises to the cytoplasm. The enzyme catalyses Release of N-terminal amino acids, preferentially methionine, from peptides and arylamides.. Functionally, cotranslationally removes the N-terminal methionine from nascent proteins. The N-terminal methionine is often cleaved when the second residue in the primary sequence is small and uncharged (Met-Ala-, Cys, Gly, Pro, Ser, Thr, or Val). This chain is Methionine aminopeptidase 2-2, found in Ajellomyces dermatitidis (strain ER-3 / ATCC MYA-2586) (Blastomyces dermatitidis).